The chain runs to 327 residues: 2-keto-3-deoxygluconate permease (327 aa).

Helical transmembrane passes span 10 to 30 (IPGG…TFSP), 42 to 62 (GMIT…GASI), 73 to 93 (KSGT…AIAS), 95 to 115 (IIPE…LALV), 139 to 159 (AGAF…IILG), 163 to 183 (IASF…VGFA), 199 to 219 (VQTL…LTVI), 224 to 244 (LLGI…LIIA), 254 to 274 (TAGI…VLIA), and 289 to 309 (SLVA…TSIW).

The protein belongs to the KdgT transporter family.

It localises to the cell inner membrane. The catalysed reaction is 2-dehydro-3-deoxy-D-gluconate(in) + H(+)(in) = 2-dehydro-3-deoxy-D-gluconate(out) + H(+)(out). Its function is as follows. Catalyzes the proton-dependent uptake of 2-keto-3-deoxygluconate (KDG) into the cell. In Escherichia coli O7:K1 (strain IAI39 / ExPEC), this protein is 2-keto-3-deoxygluconate permease.